We begin with the raw amino-acid sequence, 715 residues long: Epidermal growth factor receptor kinase substrate 8-like protein 2 (715 aa).

The PID domain maps to 46–202 (MHETSQYHVQ…RQRQSILPPP (157 aa)). The disordered stretch occupies residues 183-243 (QTLKGHQEKI…GFRRRESQEE (61 aa)). The segment covering 199-208 (LPPPQGPAPI) has biased composition (pro residues). Basic and acidic residues-rich tracts occupy residues 213–222 (RGGDSPEAKN) and 234–243 (GFRRRESQEE). At serine 240 the chain carries Phosphoserine. Threonine 303 carries the phosphothreonine modification. The disordered stretch occupies residues 448 to 487 (VSPVSRQSIRNSQKHSPTSEPTPPGDALPPVSSPHTHRGY). Serine 449 bears the Phosphoserine mark. Polar residues predominate over residues 451–466 (VSRQSIRNSQKHSPTS). Threonine 469 is modified (phosphothreonine). Residues 492–551 (AMAKYVKILYDFTARNANELSVLKDEVLEVLEDGRQWWKLRSRSGQAGYVPCNILGEARP) form the SH3 domain. Residue serine 570 is modified to Phosphoserine.

It belongs to the EPS8 family. As to quaternary structure, interacts with ABI1. Part of a complex that contains SOS1, ABI1 and EPS8L2. Associates with F-actin. In terms of tissue distribution, detected in fibroblasts and placenta.

The protein resides in the cytoplasm. The protein localises to the cell projection. It localises to the stereocilium. Its function is as follows. Stimulates guanine exchange activity of SOS1. May play a role in membrane ruffling and remodeling of the actin cytoskeleton. In the cochlea, is required for stereocilia maintenance in adult hair cells. This chain is Epidermal growth factor receptor kinase substrate 8-like protein 2 (EPS8L2), found in Homo sapiens (Human).